The following is a 630-amino-acid chain: Phosphomethylpyrimidine synthase (630 aa).

Residues Asn227, Met256, Tyr285, His321, 341–343, 382–385, and Glu421 each bind substrate; these read SRG and DGLR. His425 serves as a coordination point for Zn(2+). Tyr448 provides a ligand contact to substrate. Zn(2+) is bound at residue His489. Residues Cys569, Cys572, and Cys577 each contribute to the [4Fe-4S] cluster site.

It belongs to the ThiC family. Homodimer. [4Fe-4S] cluster serves as cofactor.

The enzyme catalyses 5-amino-1-(5-phospho-beta-D-ribosyl)imidazole + S-adenosyl-L-methionine = 4-amino-2-methyl-5-(phosphooxymethyl)pyrimidine + CO + 5'-deoxyadenosine + formate + L-methionine + 3 H(+). The protein operates within cofactor biosynthesis; thiamine diphosphate biosynthesis. Functionally, catalyzes the synthesis of the hydroxymethylpyrimidine phosphate (HMP-P) moiety of thiamine from aminoimidazole ribotide (AIR) in a radical S-adenosyl-L-methionine (SAM)-dependent reaction. This chain is Phosphomethylpyrimidine synthase, found in Hydrogenovibrio crunogenus (strain DSM 25203 / XCL-2) (Thiomicrospira crunogena).